Consider the following 466-residue polypeptide: Asparagine--tRNA ligase (466 aa).

The protein belongs to the class-II aminoacyl-tRNA synthetase family. In terms of assembly, homodimer.

Its subcellular location is the cytoplasm. It catalyses the reaction tRNA(Asn) + L-asparagine + ATP = L-asparaginyl-tRNA(Asn) + AMP + diphosphate + H(+). The polypeptide is Asparagine--tRNA ligase (Xylella fastidiosa (strain 9a5c)).